Reading from the N-terminus, the 463-residue chain is L-seryl-tRNA(Sec) selenium transferase (463 aa).

Lys-295 bears the N6-(pyridoxal phosphate)lysine mark.

The protein belongs to the SelA family. In terms of assembly, homodecamer; pentamer of dimers. Binds only one seryl-tRNA(Sec) per dimer. Pyridoxal 5'-phosphate serves as cofactor.

It is found in the cytoplasm. The catalysed reaction is L-seryl-tRNA(Sec) + selenophosphate + H(+) = L-selenocysteinyl-tRNA(Sec) + phosphate. The protein operates within aminoacyl-tRNA biosynthesis; selenocysteinyl-tRNA(Sec) biosynthesis; selenocysteinyl-tRNA(Sec) from L-seryl-tRNA(Sec) (bacterial route): step 1/1. Functionally, converts seryl-tRNA(Sec) to selenocysteinyl-tRNA(Sec) required for selenoprotein biosynthesis. The polypeptide is L-seryl-tRNA(Sec) selenium transferase (Escherichia fergusonii (strain ATCC 35469 / DSM 13698 / CCUG 18766 / IAM 14443 / JCM 21226 / LMG 7866 / NBRC 102419 / NCTC 12128 / CDC 0568-73)).